The chain runs to 142 residues: Large ribosomal subunit protein uL11 (142 aa).

The protein belongs to the universal ribosomal protein uL11 family. As to quaternary structure, part of the ribosomal stalk of the 50S ribosomal subunit. Interacts with L10 and the large rRNA to form the base of the stalk. L10 forms an elongated spine to which L12 dimers bind in a sequential fashion forming a multimeric L10(L12)X complex. Post-translationally, one or more lysine residues are methylated.

Its function is as follows. Forms part of the ribosomal stalk which helps the ribosome interact with GTP-bound translation factors. The protein is Large ribosomal subunit protein uL11 of Gamma-proteobacterium EBAC31A08.